We begin with the raw amino-acid sequence, 263 residues long: MRHEIWNEIRQQAPLIHNITNTVVANFSANGLLAIGASPVMADAIEEVAEMTFVSDALVLNIGTLGTMTEATMIRAGQAANEAGCPIVLDPVGVGATSFRRDVVERIMRHVRVSVIRGNAGEIATLIGVDWAARGVDAGDGACEPRQLALEAAKRYGCVVAVTGKEDMVSDGHVVMEVRGGTKRMTETTGTGCLLSAVVGACLAVEKNALKATVTAMSGYAYCGELASERAEGPGDFPIHFLNALHQLTQYTIPTNRIEVSTS.

Methionine 41 contributes to the substrate binding site. ATP is bound by residues arginine 117 and threonine 163. Glycine 190 is a substrate binding site.

It belongs to the Thz kinase family. Mg(2+) serves as cofactor.

It carries out the reaction 5-(2-hydroxyethyl)-4-methylthiazole + ATP = 4-methyl-5-(2-phosphooxyethyl)-thiazole + ADP + H(+). The protein operates within cofactor biosynthesis; thiamine diphosphate biosynthesis; 4-methyl-5-(2-phosphoethyl)-thiazole from 5-(2-hydroxyethyl)-4-methylthiazole: step 1/1. Its function is as follows. Catalyzes the phosphorylation of the hydroxyl group of 4-methyl-5-beta-hydroxyethylthiazole (THZ). This chain is Hydroxyethylthiazole kinase, found in Exiguobacterium sp. (strain ATCC BAA-1283 / AT1b).